Reading from the N-terminus, the 249-residue chain is MNVLSCSINTLIKEGLYEISGVEVGQHFYWQIGGFQVHAQVLITSWVVIAILLGSAVIAIRNPQTIPTDGQNFFEFVLEFIRDVSQTQIGEEYGPWVPFIGTLFLFIFVSNWSGALLPWKIIQLPQGELAAPTNDINTTVALALLTSVAYFYAGLSKKGLGYFSKYIQPTPILLPINILEDFTKPLSLSFRLFGNILADELVVVVLVSLVPLVVPIPVMFLGLFTSGIQALIFATLAAAYIGESMEGHH.

5 consecutive transmembrane segments (helical) span residues 40–60 (QVLI…VIAI), 97–117 (VPFI…GALL), 136–156 (INTT…AGLS), 201–221 (LVVV…VMFL), and 222–242 (GLFT…AYIG).

The protein belongs to the ATPase A chain family. In terms of assembly, F-type ATPases have 2 components, CF(1) - the catalytic core - and CF(0) - the membrane proton channel. CF(1) has five subunits: alpha(3), beta(3), gamma(1), delta(1), epsilon(1). CF(0) has four main subunits: a, b, b' and c.

It localises to the plastid. The protein resides in the chloroplast thylakoid membrane. In terms of biological role, key component of the proton channel; it plays a direct role in the translocation of protons across the membrane. The sequence is that of ATP synthase subunit a, chloroplastic from Barbarea verna (Land cress).